The chain runs to 174 residues: Large ribosomal subunit protein uL18 (174 aa).

It belongs to the universal ribosomal protein uL18 family. In terms of assembly, part of the 50S ribosomal subunit. Contacts the 5S and 23S rRNAs.

Its function is as follows. This is one of the proteins that bind and probably mediate the attachment of the 5S RNA into the large ribosomal subunit, where it forms part of the central protuberance. In Methanoregula boonei (strain DSM 21154 / JCM 14090 / 6A8), this protein is Large ribosomal subunit protein uL18.